The chain runs to 420 residues: Tryptophan synthase beta chain (420 aa).

Position 99 is an N6-(pyridoxal phosphate)lysine (lysine 99).

This sequence belongs to the TrpB family. Tetramer of two alpha and two beta chains. The cofactor is pyridoxal 5'-phosphate.

It catalyses the reaction (1S,2R)-1-C-(indol-3-yl)glycerol 3-phosphate + L-serine = D-glyceraldehyde 3-phosphate + L-tryptophan + H2O. It participates in amino-acid biosynthesis; L-tryptophan biosynthesis; L-tryptophan from chorismate: step 5/5. Functionally, the beta subunit is responsible for the synthesis of L-tryptophan from indole and L-serine. In Helicobacter hepaticus (strain ATCC 51449 / 3B1), this protein is Tryptophan synthase beta chain.